We begin with the raw amino-acid sequence, 8515 residues long: Nonribosomal peptide synthetase 8 (8515 aa).

Adenylation stretches follow at residues 59-736 (REHH…YRCS) and 1163-1705 (AKLS…EWVE). Residues 587–1159 (RRVVQWLENL…TVGEVALVGD (573 aa)) form a condensation 1 region. Residues 615–691 (EPETAMERRL…ELAPRVKVAE (77 aa)) enclose the Carrier 1 domain. Residue serine 652 is modified to O-(pantetheine 4'-phosphoryl)serine. The 77-residue stretch at 1732–1808 (RGLTPTETVI…KLGRHADHSS (77 aa)) folds into the Carrier 2 domain. Serine 1769 is modified (O-(pantetheine 4'-phosphoryl)serine). Residues 1830-2273 (LSPIQQWFFE…TLYDCPLAAL (444 aa)) form an epimerase 1 region. The segment at 2301 to 2709 (SHIQEGILLS…RSPEAVLHDL (409 aa)) is condensation 2. The tract at residues 2733–3266 (QCLHWLIEQW…RMILSWLSEP (534 aa)) is adenylation 3. Residues 3286–3362 (TTLGPVEKQM…KVTPRTISLS (77 aa)) form the Carrier 3 domain. The residue at position 3323 (serine 3323) is an O-(pantetheine 4'-phosphoryl)serine. The condensation 3 stretch occupies residues 3406 to 3819 (SPMQEGILLA…DNSGCSVKTV (414 aa)). In terms of domain architecture, Carrier 4 spans 3857-3933 (EPTNLIALTV…EVFEHARFSD (77 aa)). The residue at position 3894 (serine 3894) is an O-(pantetheine 4'-phosphoryl)serine. Residues 3953-4392 (LSPIQKLHFH…TPSDFQLLSL (440 aa)) form an epimerase 2 region. The segment at 4420-4823 (PCSPMQEGIL…ARPRARLGTI (404 aa)) is condensation 4. The segment at 4837–5363 (WNEQARRPVV…RKVNKWLESF (527 aa)) is adenylation 4. The Carrier 5 domain occupies 5385–5461 (PPLTPIQQTI…SLAACATAII (77 aa)). O-(pantetheine 4'-phosphoryl)serine is present on serine 5422. The condensation 5 stretch occupies residues 5508-5923 (SPMQEGILFS…SLVDHLSLCS (416 aa)). Positions 5941 to 6459 (ELRQCLHELI…GKVDRQALRR (519 aa)) are adenylation 5. Residues 6482-6558 (PISTAEEQQM…DLATLLESPA (77 aa)) enclose the Carrier 6 domain. Position 6519 is an O-(pantetheine 4'-phosphoryl)serine (serine 6519). Residues 6606 to 6992 (CTPLQESLMA…SQMKSVMGTL (387 aa)) form a condensation 6 region. The adenylation 6 stretch occupies residues 7030–7544 (VEDLIISRAQ…SSGKLARKGV (515 aa)). The region spanning 7575–7651 (IASSSVERAI…HLASREDLTA (77 aa)) is the Carrier 7 domain. Serine 7612 carries the O-(pantetheine 4'-phosphoryl)serine modification. The epimerase 3 stretch occupies residues 7670 to 8119 (LTPIQRFFFC…DYPRARLDYT (450 aa)). The segment at 8164–8504 (HFIWKIAGTK…DPTSPLQFAD (341 aa)) is condensation 7. Polar residues predominate over residues 8488-8500 (AVNSVSSDPTSPL). The disordered stretch occupies residues 8488–8515 (AVNSVSSDPTSPLQFADGQDPMPVSHQP).

This sequence belongs to the NRP synthetase family.

Functionally, nonribosomal peptide synthesis (NRPS) is a key mechanism responsible for the biosynthesis of bioactive metabolites which are potentially contributing to organismal virulence. However, contarary to other nonribosomal peptide synthases, NRPS8 does not encode a secreted peptide, but has more a structural role since it is involved in germ tube formation. This is Nonribosomal peptide synthetase 8 (NRPS8) from Aspergillus fumigatus (strain ATCC MYA-4609 / CBS 101355 / FGSC A1100 / Af293) (Neosartorya fumigata).